The sequence spans 113 residues: Iron-sulfur cluster insertion protein ErpA (113 aa).

The iron-sulfur cluster site is built by cysteine 41, cysteine 105, and cysteine 107.

The protein belongs to the HesB/IscA family. In terms of assembly, homodimer. The cofactor is iron-sulfur cluster.

Required for insertion of 4Fe-4S clusters for at least IspG. This Histophilus somni (strain 129Pt) (Haemophilus somnus) protein is Iron-sulfur cluster insertion protein ErpA.